A 310-amino-acid chain; its full sequence is ADP-L-glycero-D-manno-heptose-6-epimerase (310 aa).

NADP(+) contacts are provided by residues 10-11 (FI), 31-32 (DN), Lys-38, Lys-53, 75-79 (EGACS), and Asn-92. Catalysis depends on Tyr-140, which acts as the Proton acceptor. Lys-144 contributes to the NADP(+) binding site. Asn-169 contacts substrate. Residues Val-170 and Lys-178 each coordinate NADP(+). Lys-178 (proton acceptor) is an active-site residue. Substrate is bound by residues Gly-180, His-187, 201-204 (FAGS), Arg-209, and Tyr-272.

It belongs to the NAD(P)-dependent epimerase/dehydratase family. HldD subfamily. In terms of assembly, homopentamer. NADP(+) serves as cofactor.

The catalysed reaction is ADP-D-glycero-beta-D-manno-heptose = ADP-L-glycero-beta-D-manno-heptose. It participates in nucleotide-sugar biosynthesis; ADP-L-glycero-beta-D-manno-heptose biosynthesis; ADP-L-glycero-beta-D-manno-heptose from D-glycero-beta-D-manno-heptose 7-phosphate: step 4/4. In terms of biological role, catalyzes the interconversion between ADP-D-glycero-beta-D-manno-heptose and ADP-L-glycero-beta-D-manno-heptose via an epimerization at carbon 6 of the heptose. This chain is ADP-L-glycero-D-manno-heptose-6-epimerase, found in Sodalis glossinidius (strain morsitans).